A 267-amino-acid polypeptide reads, in one-letter code: uncharacterized protein (267 aa).

The disordered stretch occupies residues 58 to 90 (RHTDDKQEKNQNEGEDNQKGENKTTDQQDGPKK). Helical transmembrane passes span 101–121 (IYVLAVAGLSFVTSFIMLSQM) and 226–246 (GMTTVKMIQLIIGVVILAWLG).

The protein resides in the membrane. This is an uncharacterized protein from Caenorhabditis elegans.